A 469-amino-acid polypeptide reads, in one-letter code: Neuraminidase (469 aa).

The Intravirion segment spans residues 1–6; sequence MNPNQK. Residues 7 to 27 traverse the membrane as a helical segment; it reads IITIGSICMVIGIVSLMLQIG. Residues 11–33 are involved in apical transport and lipid raft association; that stretch reads GSICMVIGIVSLMLQIGNIISIW. At 28-469 the chain is on the virion surface side; it reads NIISIWVSHS…GAELPFTIDK (442 aa). The tract at residues 36–90 is hypervariable stalk region; sequence HSIQTGNQHQAEPCNQSIITYENNTWVNQTYVNISNTNFLTEKAVASVTLAGNSS. Residues asparagine 50, asparagine 58, asparagine 63, asparagine 68, and asparagine 88 are each glycosylated (N-linked (GlcNAc...) asparagine; by host). Residues 91 to 469 are head of neuraminidase; sequence LCPISGWAVY…GAELPFTIDK (379 aa). Cystine bridges form between cysteine 92–cysteine 417, cysteine 124–cysteine 129, cysteine 184–cysteine 231, cysteine 233–cysteine 238, cysteine 279–cysteine 292, cysteine 281–cysteine 290, cysteine 318–cysteine 335, and cysteine 421–cysteine 446. Residue arginine 118 participates in substrate binding. An N-linked (GlcNAc...) asparagine; by host glycan is attached at asparagine 146. Aspartate 151 acts as the Proton donor/acceptor in catalysis. Arginine 152 is a binding site for substrate. N-linked (GlcNAc...) asparagine; by host glycosylation occurs at asparagine 235. Position 277 to 278 (277 to 278) interacts with substrate; that stretch reads EE. Arginine 293 serves as a coordination point for substrate. Ca(2+) contacts are provided by aspartate 294, glycine 298, and aspartate 324. Arginine 368 serves as a coordination point for substrate. N-linked (GlcNAc...) asparagine; by host glycosylation is present at asparagine 386. The active-site Nucleophile is tyrosine 402.

This sequence belongs to the glycosyl hydrolase 34 family. As to quaternary structure, homotetramer. Requires Ca(2+) as cofactor. Post-translationally, N-glycosylated.

The protein resides in the virion membrane. It localises to the host apical cell membrane. It carries out the reaction Hydrolysis of alpha-(2-&gt;3)-, alpha-(2-&gt;6)-, alpha-(2-&gt;8)- glycosidic linkages of terminal sialic acid residues in oligosaccharides, glycoproteins, glycolipids, colominic acid and synthetic substrates.. Its activity is regulated as follows. Inhibited by the neuraminidase inhibitors zanamivir (Relenza) and oseltamivir (Tamiflu). These drugs interfere with the release of progeny virus from infected cells and are effective against all influenza strains. Resistance to neuraminidase inhibitors is quite rare. Catalyzes the removal of terminal sialic acid residues from viral and cellular glycoconjugates. Cleaves off the terminal sialic acids on the glycosylated HA during virus budding to facilitate virus release. Additionally helps virus spread through the circulation by further removing sialic acids from the cell surface. These cleavages prevent self-aggregation and ensure the efficient spread of the progeny virus from cell to cell. Otherwise, infection would be limited to one round of replication. Described as a receptor-destroying enzyme because it cleaves a terminal sialic acid from the cellular receptors. May facilitate viral invasion of the upper airways by cleaving the sialic acid moieties on the mucin of the airway epithelial cells. Likely to plays a role in the budding process through its association with lipid rafts during intracellular transport. May additionally display a raft-association independent effect on budding. Plays a role in the determination of host range restriction on replication and virulence. Sialidase activity in late endosome/lysosome traffic seems to enhance virus replication. The polypeptide is Neuraminidase (Aves (Cat)).